The following is a 498-amino-acid chain: ATP synthase subunit beta, chloroplastic (498 aa).

Residue Gly-172–Thr-179 coordinates ATP.

This sequence belongs to the ATPase alpha/beta chains family. As to quaternary structure, F-type ATPases have 2 components, CF(1) - the catalytic core - and CF(0) - the membrane proton channel. CF(1) has five subunits: alpha(3), beta(3), gamma(1), delta(1), epsilon(1). CF(0) has four main subunits: a(1), b(1), b'(1) and c(9-12).

It is found in the plastid. The protein localises to the chloroplast thylakoid membrane. The enzyme catalyses ATP + H2O + 4 H(+)(in) = ADP + phosphate + 5 H(+)(out). In terms of biological role, produces ATP from ADP in the presence of a proton gradient across the membrane. The catalytic sites are hosted primarily by the beta subunits. This chain is ATP synthase subunit beta, chloroplastic, found in Oenothera biennis (German evening primrose).